The following is a 128-amino-acid chain: MEVVNALGRRKRAIARVFVSEGTGKITINKRDLAEYFPSTILQYVVKQPLNKLGVAEKYDIKVNLCGGGFTGQSQALRLAIARALVKINAEDKPALRSEGFMTRDPRSVERKKPGQPKARRRFQFSKR.

Residues 97–113 show a composition bias toward basic and acidic residues; that stretch reads RSEGFMTRDPRSVERKK. The tract at residues 97–128 is disordered; it reads RSEGFMTRDPRSVERKKPGQPKARRRFQFSKR. Positions 114–128 are enriched in basic residues; sequence PGQPKARRRFQFSKR.

This sequence belongs to the universal ribosomal protein uS9 family.

The protein is Small ribosomal subunit protein uS9 of Bacteroides fragilis (strain ATCC 25285 / DSM 2151 / CCUG 4856 / JCM 11019 / LMG 10263 / NCTC 9343 / Onslow / VPI 2553 / EN-2).